Here is a 49-residue protein sequence, read N- to C-terminus: Beta-toxin Rc1 (49 aa).

3 cysteine pairs are disulfide-bonded: Cys15-Cys31, Cys22-Cys40, and Cys26-Cys42.

Belongs to the long (4 C-C) scorpion toxin superfamily. Sodium channel inhibitor family. Beta subfamily. Expressed by the venom gland.

It localises to the secreted. Functionally, beta toxins bind voltage-independently at site-4 of sodium channels (Nav) and shift the voltage of activation toward more negative potentials thereby affecting sodium channel activation and promoting spontaneous and repetitive firing. This toxin acts on X.laevis Nav1.6/SCN8A and insect BgNav1 channels, and also displays a small but significant effect on X.laevis Nav1.4/SCN4A channels. In mice induces nociception (licking and lifting behaviors) during the first 15 minutes after injection, and increases the release of TNF-alpha in J774.1 cells. The protein is Beta-toxin Rc1 of Rhopalurus crassicauda (Scorpion).